Here is a 209-residue protein sequence, read N- to C-terminus: Imidazole glycerol phosphate synthase subunit HisH (209 aa).

The Glutamine amidotransferase type-1 domain occupies 4–209; the sequence is PVVVFEYGSG…RLLANWIGSL (206 aa). The Nucleophile role is filled by Cys82. Catalysis depends on residues His190 and Glu192.

As to quaternary structure, heterodimer of HisH and HisF.

The protein localises to the cytoplasm. It carries out the reaction 5-[(5-phospho-1-deoxy-D-ribulos-1-ylimino)methylamino]-1-(5-phospho-beta-D-ribosyl)imidazole-4-carboxamide + L-glutamine = D-erythro-1-(imidazol-4-yl)glycerol 3-phosphate + 5-amino-1-(5-phospho-beta-D-ribosyl)imidazole-4-carboxamide + L-glutamate + H(+). The catalysed reaction is L-glutamine + H2O = L-glutamate + NH4(+). Its pathway is amino-acid biosynthesis; L-histidine biosynthesis; L-histidine from 5-phospho-alpha-D-ribose 1-diphosphate: step 5/9. IGPS catalyzes the conversion of PRFAR and glutamine to IGP, AICAR and glutamate. The HisH subunit catalyzes the hydrolysis of glutamine to glutamate and ammonia as part of the synthesis of IGP and AICAR. The resulting ammonia molecule is channeled to the active site of HisF. The protein is Imidazole glycerol phosphate synthase subunit HisH of Leifsonia xyli subsp. xyli (strain CTCB07).